The chain runs to 199 residues: Segregation and condensation protein B (199 aa).

This sequence belongs to the ScpB family. In terms of assembly, homodimer. Homodimerization may be required to stabilize the binding of ScpA to the Smc head domains. Component of a cohesin-like complex composed of ScpA, ScpB and the Smc homodimer, in which ScpA and ScpB bind to the head domain of Smc. The presence of the three proteins is required for the association of the complex with DNA.

The protein resides in the cytoplasm. Participates in chromosomal partition during cell division. May act via the formation of a condensin-like complex containing Smc and ScpA that pull DNA away from mid-cell into both cell halves. The chain is Segregation and condensation protein B from Leuconostoc mesenteroides subsp. mesenteroides (strain ATCC 8293 / DSM 20343 / BCRC 11652 / CCM 1803 / JCM 6124 / NCDO 523 / NBRC 100496 / NCIMB 8023 / NCTC 12954 / NRRL B-1118 / 37Y).